Consider the following 490-residue polypeptide: UDP-glucosyl transferase 73M2 (490 aa).

His-20 serves as the catalytic Proton acceptor. Asp-124 acts as the Charge relay in catalysis. 8 residues coordinate UDP: Ser-297, Trp-353, Ala-354, His-371, Asn-375, Ser-376, Glu-379, and Tyr-393.

Belongs to the UDP-glycosyltransferase family. As to expression, mainly expressed in flowers, flower buds and young leaves, and, to a lesser extent, in old leaves, stems and roots.

Its pathway is secondary metabolite biosynthesis; terpenoid biosynthesis. Functionally, component of the oleanane-type triterpene saponins (e.g. saponarioside A and saponarioside B) biosynthetic pathway, leading to the production of natural products with detergent properties used as traditional sources of soap. A glycosyltransferase that mediates the conversion of QA-triFRX to QA-triFRXX via the elongation of the C-28 sugar chain with a D-xylose. The sequence is that of UDP-glucosyl transferase 73M2 from Saponaria officinalis (Common soapwort).